The primary structure comprises 511 residues: MGASVALTFLLLLATFRAGSGHDEVETRECIYYNANWELEKTNQSGVERLVEGKKDKRLHCYASWRNNSGFIELVKKGCWLDDFNCYDRQECIAKEENPQVFFCCCEGNYCNKKFTHLPEVETFDPKPQPSASVLNILIYSLLPIVGLSMAILLAFWMYRHRKPSYGHVEINEDPGLPPPSPLVGLKPLQLLDIKARGRFGCVWKARLLNEYVAVKIFPVQDKQSWQCEKEIFTTPGMKHENLLEFIAAEKRGSNLEMELWLITAFHDKGSLTDYLKGNLVSWNELCHITETMARGLAYLHEDVPRCKGEGHKPAIAHRDFKSKNVLLRNDLTAILADFGLAVRFEPGKPPGDTHGQVGTRRYMAPEVLEGAINFQRDSFLRIDMYAMGLVLWEIVSRCTAADGPVDEYLLPFEEEIGQHPSLEDLQEVVVHKKIRPVFKDHWLKHPGLAQLCVTIEECWDHDAEARLSAGCVEERISQIRKSVNGTTSDCLVSIVTSVTNVDLPPKESSI.

Residues 1 to 20 form the signal peptide; it reads MGASVALTFLLLLATFRAGS. Residues 21 to 136 are Extracellular-facing; that stretch reads GHDEVETREC…KPQPSASVLN (116 aa). A disulfide bridge connects residues C30 and C61. N-linked (GlcNAc...) asparagine glycans are attached at residues N43 and N67. Disulfide bonds link C86–C105, C92–C104, and C106–C111. A helical transmembrane segment spans residues 137–157; the sequence is ILIYSLLPIVGLSMAILLAFW. At 158-511 the chain is on the cytoplasmic side; it reads MYRHRKPSYG…VDLPPKESSI (354 aa). The Protein kinase domain occupies 189 to 477; the sequence is LQLLDIKARG…LSAGCVEERI (289 aa). ATP contacts are provided by residues 195–203 and K216; that span reads KARGRFGCV. Catalysis depends on D320, which acts as the Proton acceptor.

Belongs to the protein kinase superfamily. TKL Ser/Thr protein kinase family. TGFB receptor subfamily.

The protein localises to the membrane. The catalysed reaction is L-threonyl-[receptor-protein] + ATP = O-phospho-L-threonyl-[receptor-protein] + ADP + H(+). It catalyses the reaction L-seryl-[receptor-protein] + ATP = O-phospho-L-seryl-[receptor-protein] + ADP + H(+). Its function is as follows. Receptor for activin A, activin B and inhibin A. Involved in transmembrane signaling. The sequence is that of Activin receptor type-2B (acvr2b) from Xenopus laevis (African clawed frog).